The chain runs to 1052 residues: Carbamoyl phosphate synthase large chain (1052 aa).

The interval 1-399 is carboxyphosphate synthetic domain; that stretch reads MRENVKRVLV…ALQKAVRMLD (399 aa). Positions 127, 167, 173, 174, 206, 208, 213, 239, 240, 241, 282, and 296 each coordinate ATP. One can recognise an ATP-grasp 1 domain in the interval 131–325; the sequence is RETMINVNLP…LAYVSAKLAL (195 aa). Positions 282, 296, and 298 each coordinate Mg(2+). Positions 282, 296, and 298 each coordinate Mn(2+). The tract at residues 400–548 is oligomerization domain; that stretch reads LGEPGIIGGK…VTYNGTEDDI (149 aa). The carbamoyl phosphate synthetic domain stretch occupies residues 549–930; sequence EFSNGIRKLL…LKSWLSSSPN (382 aa). One can recognise an ATP-grasp 2 domain in the interval 674–864; the sequence is SRLLDKLGIK…IIDLALTGVI (191 aa). Arg710, Lys749, Ile751, Glu756, Gly780, Val781, His782, Ser783, Gln823, and Glu835 together coordinate ATP. Mg(2+)-binding residues include Gln823, Glu835, and Asn837. Mn(2+)-binding residues include Gln823, Glu835, and Asn837. Residues 930–1052 enclose the MGS-like domain; it reads NRLPDQKGIA…YEIGEYGAGI (123 aa). The tract at residues 931-1052 is allosteric domain; the sequence is RLPDQKGIAL…YEIGEYGAGI (122 aa).

It belongs to the CarB family. Composed of two chains; the small (or glutamine) chain promotes the hydrolysis of glutamine to ammonia, which is used by the large (or ammonia) chain to synthesize carbamoyl phosphate. Tetramer of heterodimers (alpha,beta)4. The cofactor is Mg(2+). It depends on Mn(2+) as a cofactor.

It catalyses the reaction hydrogencarbonate + L-glutamine + 2 ATP + H2O = carbamoyl phosphate + L-glutamate + 2 ADP + phosphate + 2 H(+). It carries out the reaction hydrogencarbonate + NH4(+) + 2 ATP = carbamoyl phosphate + 2 ADP + phosphate + 2 H(+). The protein operates within amino-acid biosynthesis; L-arginine biosynthesis; carbamoyl phosphate from bicarbonate: step 1/1. Its pathway is pyrimidine metabolism; UMP biosynthesis via de novo pathway; (S)-dihydroorotate from bicarbonate: step 1/3. Its function is as follows. Large subunit of the glutamine-dependent carbamoyl phosphate synthetase (CPSase). CPSase catalyzes the formation of carbamoyl phosphate from the ammonia moiety of glutamine, carbonate, and phosphate donated by ATP, constituting the first step of 2 biosynthetic pathways, one leading to arginine and/or urea and the other to pyrimidine nucleotides. The large subunit (synthetase) binds the substrates ammonia (free or transferred from glutamine from the small subunit), hydrogencarbonate and ATP and carries out an ATP-coupled ligase reaction, activating hydrogencarbonate by forming carboxy phosphate which reacts with ammonia to form carbamoyl phosphate. This is Carbamoyl phosphate synthase large chain from Sulfolobus acidocaldarius (strain ATCC 33909 / DSM 639 / JCM 8929 / NBRC 15157 / NCIMB 11770).